The primary structure comprises 284 residues: Prolyl 4-hydroxylase subunit alpha (284 aa).

Residues 169–284 form the Fe2OG dioxygenase domain; the sequence is NFNSIKTQTQ…PRIAITTWIY (116 aa). Fe cation is bound by residues His-191, Asp-193, and His-266. Arg-276 contacts 2-oxoglutarate.

This sequence belongs to the P4HA family. As to quaternary structure, heterotetramer of two alpha-1 chains and two beta chains (the beta chain is the multi-functional PDI). Fe(2+) is required as a cofactor. The cofactor is L-ascorbate.

It is found in the cytoplasm. The catalysed reaction is L-prolyl-[Skp1 protein] + 2-oxoglutarate + O2 = trans-4-hydroxy-L-prolyl-[Skp1 protein] + succinate + CO2. Inhibited by the prolyl-hydroxylase inhibitors alpha,alpha'-dipyridyl and ethyl 3,4-dihydroxybenzoate. In terms of biological role, catalyzes the post-translational formation of 4-hydroxyproline. Probably hydroxylates skp1 on Pro-143. This is Prolyl 4-hydroxylase subunit alpha (phyA) from Dictyostelium discoideum (Social amoeba).